The chain runs to 46 residues: Large ribosomal subunit protein bL34c (46 aa).

Belongs to the bacterial ribosomal protein bL34 family.

It is found in the plastid. The protein resides in the chloroplast. The chain is Large ribosomal subunit protein bL34c (rpl34) from Guillardia theta (Cryptophyte).